The following is a 340-amino-acid chain: NADH-quinone oxidoreductase subunit H (340 aa).

The next 8 membrane-spanning stretches (helical) occupy residues 4-24 (TIGI…PLLL), 78-98 (YLFV…WAVI), 113-133 (VLYL…AGWA), 151-171 (VSYE…AGSM), 184-204 (MLHW…IAGI), 244-264 (SMIL…LSPF), 273-293 (IFFV…FLFV), and 316-336 (VLIP…VAHV).

It belongs to the complex I subunit 1 family. NDH-1 is composed of 14 different subunits. Subunits NuoA, H, J, K, L, M, N constitute the membrane sector of the complex.

Its subcellular location is the cell inner membrane. The catalysed reaction is a quinone + NADH + 5 H(+)(in) = a quinol + NAD(+) + 4 H(+)(out). In terms of biological role, NDH-1 shuttles electrons from NADH, via FMN and iron-sulfur (Fe-S) centers, to quinones in the respiratory chain. The immediate electron acceptor for the enzyme in this species is believed to be ubiquinone. Couples the redox reaction to proton translocation (for every two electrons transferred, four hydrogen ions are translocated across the cytoplasmic membrane), and thus conserves the redox energy in a proton gradient. This subunit may bind ubiquinone. The chain is NADH-quinone oxidoreductase subunit H from Legionella pneumophila (strain Paris).